The primary structure comprises 464 residues: Probable pectin lyase F (464 aa).

An N-terminal signal peptide occupies residues 1–20; the sequence is MAIIRSVIAATALLGAAVNA. Cysteines 80 and 103 form a disulfide. Residue asparagine 126 is glycosylated (N-linked (GlcNAc...) asparagine). The active site involves arginine 252. The cysteines at positions 319 and 327 are disulfide-linked. The tract at residues 424-464 is disordered; the sequence is EHEVSTPAVPTPTPVPSSVGSHGSTAGSSHPPAFSRTSFES. Positions 439–448 are enriched in low complexity; the sequence is PSSVGSHGST.

Belongs to the polysaccharide lyase 1 family.

The protein localises to the secreted. It carries out the reaction Eliminative cleavage of (1-&gt;4)-alpha-D-galacturonan methyl ester to give oligosaccharides with 4-deoxy-6-O-methyl-alpha-D-galact-4-enuronosyl groups at their non-reducing ends.. In terms of biological role, pectinolytic enzymes consist of four classes of enzymes: pectin lyase, polygalacturonase, pectin methylesterase and rhamnogalacturonase. Among pectinolytic enzymes, pectin lyase is the most important in depolymerization of pectin, since it cleaves internal glycosidic bonds of highly methylated pectins. This Emericella nidulans (strain FGSC A4 / ATCC 38163 / CBS 112.46 / NRRL 194 / M139) (Aspergillus nidulans) protein is Probable pectin lyase F (pelF).